Here is a 397-residue protein sequence, read N- to C-terminus: L-cysteine desulfidase (397 aa).

Cys23 serves as the catalytic Proton acceptor. [4Fe-4S] cluster is bound by residues Cys288, Cys330, and Cys337.

This sequence belongs to the L-cysteine desulfidase family. In terms of assembly, homotrimer. It depends on [4Fe-4S] cluster as a cofactor.

It catalyses the reaction L-cysteine + H2O = hydrogen sulfide + pyruvate + NH4(+) + H(+). In terms of biological role, catalyzes the cleavage of L-cysteine to form 2-aminoprop-2-enoate and sulfide. The former then spontaneously hydrolyzes to pyruvate and NH(3). May be responsible for the production of sulfide required for the biosynthesis of iron-sulfur centers in this archaea. The chain is L-cysteine desulfidase from Methanococcus maripaludis (strain C7 / ATCC BAA-1331).